The following is a 119-amino-acid chain: MEKIAFVFSHAPHGTSFGKEGLDVILGVSSIIKKISLFFIGDGVLQILKHSKSENILARNYTSSFRILSIYDIKNFYCCKSSLIDRGLYSHNQFILKVNILNSYFFRIKLDDHDAIINF.

It belongs to the DsrF/TusC family. As to quaternary structure, heterohexamer, formed by a dimer of trimers. The hexameric TusBCD complex contains 2 copies each of TusB, TusC and TusD. The TusBCD complex interacts with TusE.

The protein localises to the cytoplasm. Functionally, part of a sulfur-relay system required for 2-thiolation of 5-methylaminomethyl-2-thiouridine (mnm(5)s(2)U) at tRNA wobble positions. In Buchnera aphidicola subsp. Schizaphis graminum (strain Sg), this protein is Protein TusC.